The chain runs to 84 residues: Inactive transposase YbfQ (84 aa).

This chain is Inactive transposase YbfQ (ybfQ), found in Escherichia coli (strain K12).